We begin with the raw amino-acid sequence, 203 residues long: Octanoyltransferase (203 aa).

The BPL/LPL catalytic domain maps to 30-203 (EDQDNYFFIT…HIIKEGRKLV (174 aa)). Residues 69 to 76 (RGGSVTFH), 135 to 137 (SVG), and 148 to 150 (GIS) each bind substrate. Cys-166 (acyl-thioester intermediate) is an active-site residue.

It belongs to the LipB family.

Its subcellular location is the cytoplasm. The catalysed reaction is octanoyl-[ACP] + L-lysyl-[protein] = N(6)-octanoyl-L-lysyl-[protein] + holo-[ACP] + H(+). It functions in the pathway protein modification; protein lipoylation via endogenous pathway; protein N(6)-(lipoyl)lysine from octanoyl-[acyl-carrier-protein]: step 1/2. In terms of biological role, catalyzes the transfer of endogenously produced octanoic acid from octanoyl-acyl-carrier-protein onto the lipoyl domains of lipoate-dependent enzymes. Lipoyl-ACP can also act as a substrate although octanoyl-ACP is likely to be the physiological substrate. This Persephonella marina (strain DSM 14350 / EX-H1) protein is Octanoyltransferase.